The sequence spans 96 residues: (4S)-4-hydroxy-5-phosphonooxypentane-2,3-dione isomerase (96 aa).

In terms of domain architecture, ABM spans 2–91 (HVTLVEINVH…MTGPRKKRLF (90 aa)).

It belongs to the LsrG family. As to quaternary structure, homodimer.

It is found in the cytoplasm. It carries out the reaction (2S)-2-hydroxy-3,4-dioxopentyl phosphate = 3-hydroxy-2,4-dioxopentyl phosphate. In terms of biological role, involved in the degradation of phospho-AI-2, thereby terminating induction of the lsr operon and closing the AI-2 signaling cycle. Catalyzes the conversion of (4S)-4-hydroxy-5-phosphonooxypentane-2,3-dione (P-DPD) to 3-hydroxy-5-phosphonooxypentane-2,4-dione (P-HPD). This Shigella flexneri serotype 5b (strain 8401) protein is (4S)-4-hydroxy-5-phosphonooxypentane-2,3-dione isomerase.